Reading from the N-terminus, the 374-residue chain is Queuine tRNA-ribosyltransferase (374 aa).

Asp-89 acts as the Proton acceptor in catalysis. Substrate is bound by residues 89–93, Asp-143, Gln-187, and Gly-214; that span reads DSGGF. Positions 245 to 251 are RNA binding; that stretch reads GVGKPED. Asp-264 serves as the catalytic Nucleophile. The RNA binding; important for wobble base 34 recognition stretch occupies residues 269–273; it reads TRNAR. Positions 302, 304, 307, and 333 each coordinate Zn(2+).

Belongs to the queuine tRNA-ribosyltransferase family. In terms of assembly, homodimer. Within each dimer, one monomer is responsible for RNA recognition and catalysis, while the other monomer binds to the replacement base PreQ1. Zn(2+) serves as cofactor.

The enzyme catalyses 7-aminomethyl-7-carbaguanine + guanosine(34) in tRNA = 7-aminomethyl-7-carbaguanosine(34) in tRNA + guanine. It functions in the pathway tRNA modification; tRNA-queuosine biosynthesis. Its function is as follows. Catalyzes the base-exchange of a guanine (G) residue with the queuine precursor 7-aminomethyl-7-deazaguanine (PreQ1) at position 34 (anticodon wobble position) in tRNAs with GU(N) anticodons (tRNA-Asp, -Asn, -His and -Tyr). Catalysis occurs through a double-displacement mechanism. The nucleophile active site attacks the C1' of nucleotide 34 to detach the guanine base from the RNA, forming a covalent enzyme-RNA intermediate. The proton acceptor active site deprotonates the incoming PreQ1, allowing a nucleophilic attack on the C1' of the ribose to form the product. After dissociation, two additional enzymatic reactions on the tRNA convert PreQ1 to queuine (Q), resulting in the hypermodified nucleoside queuosine (7-(((4,5-cis-dihydroxy-2-cyclopenten-1-yl)amino)methyl)-7-deazaguanosine). This Shewanella baltica (strain OS223) protein is Queuine tRNA-ribosyltransferase.